A 228-amino-acid chain; its full sequence is Orotate phosphoribosyltransferase (228 aa).

A 5-phospho-alpha-D-ribose 1-diphosphate-binding site is contributed by lysine 26. 34-35 serves as a coordination point for orotate; sequence FF. 5-phospho-alpha-D-ribose 1-diphosphate contacts are provided by residues 72-73, arginine 98, lysine 99, lysine 102, histidine 104, and 123-131; these read YK and DDVISAGTS. Orotate-binding residues include serine 127 and arginine 155.

Belongs to the purine/pyrimidine phosphoribosyltransferase family. PyrE subfamily. As to quaternary structure, homodimer. Requires Mg(2+) as cofactor.

It catalyses the reaction orotidine 5'-phosphate + diphosphate = orotate + 5-phospho-alpha-D-ribose 1-diphosphate. It functions in the pathway pyrimidine metabolism; UMP biosynthesis via de novo pathway; UMP from orotate: step 1/2. In terms of biological role, catalyzes the transfer of a ribosyl phosphate group from 5-phosphoribose 1-diphosphate to orotate, leading to the formation of orotidine monophosphate (OMP). The sequence is that of Orotate phosphoribosyltransferase from Nitrosospira multiformis (strain ATCC 25196 / NCIMB 11849 / C 71).